Reading from the N-terminus, the 585-residue chain is Clathrin heavy chain linker domain-containing protein 1 (585 aa).

A coiled-coil region spans residues Gln-118 to Gln-239.

The chain is Clathrin heavy chain linker domain-containing protein 1 (Clhc1) from Rattus norvegicus (Rat).